The chain runs to 637 residues: 1-deoxy-D-xylulose-5-phosphate synthase (637 aa).

Thiamine diphosphate is bound by residues His-75 and 116 to 118 (AHS). Residue Asp-147 coordinates Mg(2+). Thiamine diphosphate-binding positions include 148–149 (GA), Asn-177, Tyr-288, and Glu-370. Asn-177 is a binding site for Mg(2+).

Belongs to the transketolase family. DXPS subfamily. In terms of assembly, homodimer. The cofactor is Mg(2+). Thiamine diphosphate is required as a cofactor.

It catalyses the reaction D-glyceraldehyde 3-phosphate + pyruvate + H(+) = 1-deoxy-D-xylulose 5-phosphate + CO2. It participates in metabolic intermediate biosynthesis; 1-deoxy-D-xylulose 5-phosphate biosynthesis; 1-deoxy-D-xylulose 5-phosphate from D-glyceraldehyde 3-phosphate and pyruvate: step 1/1. Its function is as follows. Catalyzes the acyloin condensation reaction between C atoms 2 and 3 of pyruvate and glyceraldehyde 3-phosphate to yield 1-deoxy-D-xylulose-5-phosphate (DXP). The polypeptide is 1-deoxy-D-xylulose-5-phosphate synthase (Cupriavidus metallidurans (strain ATCC 43123 / DSM 2839 / NBRC 102507 / CH34) (Ralstonia metallidurans)).